The chain runs to 99 residues: Teretoxin Tsu6.4 (99 aa).

Positions 1–21 (MRLLLILVLLTPVIVAFSVDE) are cleaved as a signal peptide. The propeptide occupies 22-53 (ELNNADGANAASFTADQEVRHKRNLFPAIARR).

Post-translationally, contains 3 disulfide bonds. Expressed by the venom duct.

The protein resides in the secreted. The protein is Teretoxin Tsu6.4 of Terebra subulata (Chocolate spotted auger).